A 173-amino-acid polypeptide reads, in one-letter code: Large ribosomal subunit protein uL10 (173 aa).

Belongs to the universal ribosomal protein uL10 family. Part of the ribosomal stalk of the 50S ribosomal subunit. The N-terminus interacts with L11 and the large rRNA to form the base of the stalk. The C-terminus forms an elongated spine to which L12 dimers bind in a sequential fashion forming a multimeric L10(L12)X complex.

In terms of biological role, forms part of the ribosomal stalk, playing a central role in the interaction of the ribosome with GTP-bound translation factors. The sequence is that of Large ribosomal subunit protein uL10 from Desulfatibacillum aliphaticivorans.